Consider the following 454-residue polypeptide: T-box protein VegT (454 aa).

Positions 57 to 230 (LWSQFHQEGT…HNPFAKGFRE (174 aa)) form a DNA-binding region, T-box. The span at 229-241 (REQERSHKRDDVL) shows a compositional bias: basic and acidic residues. 2 disordered regions span residues 229 to 274 (REQE…ATRV) and 295 to 358 (ANQG…VPDS). Polar residues predominate over residues 308–325 (GVNQEQQVPTSSLNFYNK).

In terms of assembly, forms a repression complex on the promoters of the nodal/nr1 and siamois genes with the maternal factors tcf7l1/tcf3 and pouf5.1/oct-25. Interacts (via C-terminus) with tcf7l1/tcf3 (via N-terminus). Also interacts with the other POU-domain transcription factors pou5f1.2/oct-91 and pou5f1.3/oct-60.

The protein resides in the nucleus. Transcription factor required for both mesoderm and endoderm formation in the embryo; signaling determinants and concentration levels may determine which germ layer is formed. Acts together with beta-catenin to activate genes that are responsible for mesoderm induction including wnt-8, eomes t/bra, siamois, mix1 and sox17. Directly binds to promoter DNA. Patterns the mesoderm along the dorsoventral and posterior axis. Activates siamois gene transcription when alone or in combination with beta-catenin, but inhibits siamois transcription in combination with pou5f1.1/oct-25. The sequence is that of T-box protein VegT from Xenopus borealis (Kenyan clawed frog).